A 261-amino-acid polypeptide reads, in one-letter code: Ribonuclease HII (261 aa).

Residues 71–259 enclose the RNase H type-2 domain; the sequence is KYIAGVDEVG…VKESKLHFDS (189 aa). A divalent metal cation contacts are provided by D77, E78, and D169.

Belongs to the RNase HII family. It depends on Mn(2+) as a cofactor. Requires Mg(2+) as cofactor.

The protein localises to the cytoplasm. It catalyses the reaction Endonucleolytic cleavage to 5'-phosphomonoester.. Functionally, endonuclease that specifically degrades the RNA of RNA-DNA hybrids. This chain is Ribonuclease HII, found in Listeria monocytogenes serovar 1/2a (strain ATCC BAA-679 / EGD-e).